The following is a 400-amino-acid chain: DNA polymerase IV (400 aa).

The 184-residue stretch at 8 to 191 (ILLCDANSFF…LPVRELFGIG (184 aa)) folds into the UmuC domain. The Mg(2+) site is built by aspartate 12 and aspartate 109. Residue glutamate 110 is part of the active site.

This sequence belongs to the DNA polymerase type-Y family. In terms of assembly, monomer. Requires Mg(2+) as cofactor.

It localises to the cytoplasm. It catalyses the reaction DNA(n) + a 2'-deoxyribonucleoside 5'-triphosphate = DNA(n+1) + diphosphate. Poorly processive, error-prone DNA polymerase involved in untargeted mutagenesis. Copies undamaged DNA at stalled replication forks, which arise in vivo from mismatched or misaligned primer ends. These misaligned primers can be extended by PolIV. Exhibits no 3'-5' exonuclease (proofreading) activity. May be involved in translesional synthesis, in conjunction with the beta clamp from PolIII. In Moorella thermoacetica (strain ATCC 39073 / JCM 9320), this protein is DNA polymerase IV.